The following is a 188-amino-acid chain: Elongation factor P 1 (188 aa).

It belongs to the elongation factor P family.

Its subcellular location is the cytoplasm. It participates in protein biosynthesis; polypeptide chain elongation. In terms of biological role, involved in peptide bond synthesis. Stimulates efficient translation and peptide-bond synthesis on native or reconstituted 70S ribosomes in vitro. Probably functions indirectly by altering the affinity of the ribosome for aminoacyl-tRNA, thus increasing their reactivity as acceptors for peptidyl transferase. In Mesorhizobium japonicum (strain LMG 29417 / CECT 9101 / MAFF 303099) (Mesorhizobium loti (strain MAFF 303099)), this protein is Elongation factor P 1.